The chain runs to 47 residues: Putative beta-neurotoxin (47 aa).

Positions 1-47 constitute an LCN-type CS-alpha/beta domain; that stretch reads KEGYMGSDGCKMSCVINDQFCDTECQAKLKGSTGYCYFXGLACYXXG. Cystine bridges form between Cys14-Cys36 and Cys21-Cys43.

In terms of tissue distribution, expressed by the venom gland.

The protein localises to the secreted. Functionally, causes transient paralysis of the rear legs of and spasms in insects (A.domestica). In Rhopalurus junceus (Caribbean blue scorpion), this protein is Putative beta-neurotoxin.